The primary structure comprises 360 residues: Threonine synthase (360 aa).

Lysine 69 carries the N6-(pyridoxal phosphate)lysine modification. Residues asparagine 95, 196-200, and threonine 326 each bind pyridoxal 5'-phosphate; that span reads GNAGN.

This sequence belongs to the threonine synthase family. Homodimer. Pyridoxal 5'-phosphate is required as a cofactor.

It catalyses the reaction O-phospho-L-homoserine + H2O = L-threonine + phosphate. Its pathway is amino-acid biosynthesis; L-threonine biosynthesis; L-threonine from L-aspartate: step 5/5. In terms of biological role, catalyzes the gamma-elimination of phosphate from L-phosphohomoserine and the beta-addition of water to produce L-threonine. The chain is Threonine synthase (thrC) from Mycobacterium leprae (strain TN).